A 37-amino-acid polypeptide reads, in one-letter code: Delta-amaurobitoxin-Pl1b (37 aa).

Cystine bridges form between Cys2–Cys18, Cys9–Cys23, Cys17–Cys33, and Cys25–Cys31. Ser37 carries the serine amide modification.

Belongs to the neurotoxin 07 (Beta/delta-agtx) family. 02 (aga-3) subfamily. Expressed by the venom gland.

The protein localises to the secreted. Functionally, insecticidal toxin. Binds to site 4 of insect voltage-gated sodium channel (Nav) and inhibits channel inactivation. In vivo, it lethal to lepidopteran larvae. Has no adverse affects when intracerebroventricularly injected in mice at a dose of 0.2 ug, but causes reversible paralysis of legs when injected intracerebroventricularly in mice at a dose of 2.0 ug. The protein is Delta-amaurobitoxin-Pl1b of Pireneitega luctuosa (Tangled nest spider).